We begin with the raw amino-acid sequence, 313 residues long: Ribosomal RNA small subunit methyltransferase H (313 aa).

S-adenosyl-L-methionine contacts are provided by residues 35–37 (GGH), D55, F79, D101, and Q108.

This sequence belongs to the methyltransferase superfamily. RsmH family.

Its subcellular location is the cytoplasm. The enzyme catalyses cytidine(1402) in 16S rRNA + S-adenosyl-L-methionine = N(4)-methylcytidine(1402) in 16S rRNA + S-adenosyl-L-homocysteine + H(+). Its function is as follows. Specifically methylates the N4 position of cytidine in position 1402 (C1402) of 16S rRNA. The protein is Ribosomal RNA small subunit methyltransferase H of Salmonella paratyphi A (strain ATCC 9150 / SARB42).